A 1417-amino-acid polypeptide reads, in one-letter code: DNA-directed RNA polymerase subunit beta' (1417 aa).

Residues Cys-68, Cys-70, Cys-83, and Cys-86 each contribute to the Zn(2+) site. Asp-458, Asp-460, and Asp-462 together coordinate Mg(2+). Cys-811, Cys-884, Cys-891, and Cys-894 together coordinate Zn(2+).

Belongs to the RNA polymerase beta' chain family. As to quaternary structure, the RNAP catalytic core consists of 2 alpha, 1 beta, 1 beta' and 1 omega subunit. When a sigma factor is associated with the core the holoenzyme is formed, which can initiate transcription. It depends on Mg(2+) as a cofactor. Requires Zn(2+) as cofactor.

It carries out the reaction RNA(n) + a ribonucleoside 5'-triphosphate = RNA(n+1) + diphosphate. In terms of biological role, DNA-dependent RNA polymerase catalyzes the transcription of DNA into RNA using the four ribonucleoside triphosphates as substrates. In Francisella tularensis subsp. mediasiatica (strain FSC147), this protein is DNA-directed RNA polymerase subunit beta'.